The chain runs to 414 residues: Patatin-like protein 1 (414 aa).

Positions 22–228 constitute a PNPLA domain; it reads LSLDGGGVRG…TANNPTLVAM (207 aa). Positions 26–31 match the GXGXXG motif; it reads GGGVRG. The short motif at 64-68 is the GXSXG element; sequence GTSTG. The active-site Nucleophile is the S66. Catalysis depends on D215, which acts as the Proton acceptor. The short motif at 215 to 217 is the DGA/G element; sequence DGA. S399 is subject to Phosphoserine.

The protein belongs to the patatin family. Phosphorylated at Ser-399 by CPK3. Phosphorylation enhances PLP1 activity towards phosphatidylcholine. In terms of tissue distribution, expressed specifically in roots and root hairs.

Its subcellular location is the cytoplasm. Possesses non-specific lipolytic acyl hydrolase (LAH) activity. Catalyzes the hydrolysis of the neutral lipids monogalactosyldiacylglycerol (MGDG), digalactosyldiacylglycerol (DGDG) and phosphatidylglycerol (PG), and less efficiently the polar lipids phosphatidylcholine (PC) and phosphatidylinositol (PI), but not the storage lipid triacylglycerol (TAG). May play a role in root development. This chain is Patatin-like protein 1 (PLP1), found in Arabidopsis thaliana (Mouse-ear cress).